A 960-amino-acid chain; its full sequence is Gamma-aminobutyric acid type B receptor subunit 1 (960 aa).

An N-terminal signal peptide occupies residues 1-19 (MLLLLLVPLFLRPLGAGGA). The Extracellular portion of the chain corresponds to 20-590 (QTPNATSEGC…KTFRFLSQKL (571 aa)). N-linked (GlcNAc...) asparagine glycosylation is found at asparagine 23 and asparagine 83. 2 Sushi domains span residues 29 to 95 (CQII…PSRC) and 97 to 158 (RICS…HCQV). 3 disulfide bridges follow: cysteine 99-cysteine 144, cysteine 130-cysteine 156, and cysteine 219-cysteine 245. 4-aminobutanoate contacts are provided by serine 246, serine 269, histidine 286, and tyrosine 366. Cysteine 375 and cysteine 409 are joined by a disulfide. Asparagine 408 and asparagine 439 each carry an N-linked (GlcNAc...) asparagine glycan. Position 465 (glutamate 465) interacts with 4-aminobutanoate. Residues asparagine 481, asparagine 501, and asparagine 513 are each glycosylated (N-linked (GlcNAc...) asparagine). A helical transmembrane segment spans residues 591–611 (FISVSVLSSLGIVLAVVCLSF). Over 612 to 630 (NIYNSHVRYIQNSQPNLNN) the chain is Cytoplasmic. The helical transmembrane segment at 631–651 (LTAVGCSLALAAVFPLGLDGY) threads the bilayer. Residues 652-666 (HIGRSQFPFVCQARL) lie on the Extracellular side of the membrane. Residues 667–687 (WLLGLGFSLGYGSMFTKIWWV) form a helical membrane-spanning segment. Over 688–709 (HTVFTKKEEKKEWRKTLEPWKL) the chain is Cytoplasmic. The helical transmembrane segment at 710–730 (YATVGLLVGMDVLTLAIWQIV) threads the bilayer. Residues 731 to 767 (DPLHRTIETFAKEEPKEDIDVSILPQLEHCSSKKMNT) are Extracellular-facing. Residues 768–788 (WLGIFYGYKGLLLLLGIFLAY) form a helical membrane-spanning segment. Over 789–803 (ETKSVSTEKINDHRA) the chain is Cytoplasmic. Residues 804-824 (VGMAIYNVAVLCLITAPVTMI) form a helical membrane-spanning segment. The Extracellular segment spans residues 825–832 (LSSQQDAA). A helical membrane pass occupies residues 833 to 853 (FAFASLAIVFSSYITLVVLFV). Residues 854–960 (PKMRRLITRG…DGSRVHLLYK (107 aa)) lie on the Cytoplasmic side of the membrane. Over residues 866-879 (QSETQDTMKTGSST) the composition is skewed to polar residues. 2 disordered regions span residues 866 to 891 (QSET…RLLE) and 908 to 960 (VSEL…LLYK). Positions 870–924 (QDTMKTGSSTNNNEEEKSRLLEKENRELEKIIAEKEERVSELRHQLQSRQQLRSR) form a coiled coil. Threonine 872 carries the post-translational modification Phosphothreonine. Positions 887-915 (SRLLEKENRELEKIIAEKEERVSELRHQL) are interaction with ATF4. Threonine 929 is modified (phosphothreonine).

This sequence belongs to the G-protein coupled receptor 3 family. GABA-B receptor subfamily. In terms of assembly, heterodimer of GABBR1 and GABBR2. Homodimers may form, but are inactive. Interacts (via C-terminus) with ATF4 (via leucine zipper domain). Interacts with JAKMIP1. Ubiquitously expressed in tissues including the forebrain, cerebellum, eye, atrium, ventricle, lung, stomach, small intestine, colon, liver, spleen, kidney, urinary bladder and skeletal muscle. Expressed at low levels in testis, and more highly in brain regions. Expression is high the brain regions including cerebral cortical layers, with higher expression in VIb than in the II-V layers, pyramidal CA1-CA3 cell layers and granular cell layers of the hippocampus, granular cell layers of the dentate gyrus, including the caudate, putamen, nucleus accumbens and olfactory tubercle, the granular layer cell layers of the medial habenula, in the cerebellum, predominantly in Purkinje cells, and in the granule cell layer. Also expressed in areas of the brain including the medial geniculate nucleus, substantia nigra, pars compacta, the ventral tegmental area, and in several thalamic, amygdaloid and hypothalamic nuclei, such as the arcuate nucleus of the hypothalamus and mammilary bodies of the hypothalamus. Expressed in the amacrine cell of the retina. In terms of tissue distribution, expressed in the brain, spinal cord, stomach, testis, adrenal gland, pituitary, spleen and prostate. As to expression, expressed in the brain, spinal cord, stomach, testis, kidney and liver. Ubiquitously expressed. In terms of tissue distribution, expressed in the forebrain, cerebellum, eye, kidney and urinary bladder. As to expression, ubiquitously expressed with high expression in the pyramidal CA1-CA3 cell layers of the hippocampus, the granule cell layers of the dentate gyrus and olfactory tubercle, the whole cortex, and Purkinje cells of the cerebellum. Moderate expression in the granule cell layer of the cerebellum.

It localises to the cell membrane. The protein resides in the postsynaptic cell membrane. The protein localises to the cell projection. Its subcellular location is the dendrite. It is found in the perikaryon. Component of a heterodimeric G-protein coupled receptor for GABA, formed by GABBR1 and GABBR2. Within the heterodimeric GABA receptor, only GABBR1 seems to bind agonists, while GABBR2 mediates coupling to G proteins. Ligand binding causes a conformation change that triggers signaling via guanine nucleotide-binding proteins (G proteins) and modulates the activity of down-stream effectors, such as adenylate cyclase. Signaling inhibits adenylate cyclase, stimulates phospholipase A2, activates potassium channels, inactivates voltage-dependent calcium-channels and modulates inositol phospholipid hydrolysis. Calcium is required for high affinity binding to GABA. Plays a critical role in the fine-tuning of inhibitory synaptic transmission. Pre-synaptic GABA receptor inhibits neurotransmitter release by down-regulating high-voltage activated calcium channels, whereas postsynaptic GABA receptor decreases neuronal excitability by activating a prominent inwardly rectifying potassium (Kir) conductance that underlies the late inhibitory postsynaptic potentials. Not only implicated in synaptic inhibition but also in hippocampal long-term potentiation, slow wave sleep, muscle relaxation and antinociception. The protein is Gamma-aminobutyric acid type B receptor subunit 1 (Gabbr1) of Rattus norvegicus (Rat).